The sequence spans 857 residues: MRGGALLCGQVQDEIEQLSRESSHFSLSTGILPSLGARSNRRVKLRRFVVSPYDHKYRIWEAFLVVLVVYTAWVSPFEFGFLRKPRPPLSITDNIVNAFFAIDIIMTFFVGYLDKSTYLIVDDRKQIAFKYLRSWFLLDLVSTIPSEAAMRISSQSYGLFNMLRLWRLRRVGALFARLEKDRNFNYFWVRCAKLVCVTLFAVHCAACFYYLIAARNSNPAKTWIGANVANFLEESLWMRYVTSMYWSITTLTTVGYGDLHPVNTKEMIFDIFYMLFNLGLTAYLIGNMTNLVVHGTSRTRNFRDTIQAASNFAHRNHLPPRLQDQMLAHLCLKYRTDSEGLQQQETLDALPKAIRSSISHFLFYSLMDKVYLFRGVSNDLLFQLVSEMKAEYFPPKEDVILQNEAPTDFYILVNGTADLVDVDTGTESIVREVKAGDIIGEIGVLCYRPQLFTVRTKRLCQLLRMNRTTFLNIIQANVGDGTIIMNNLLQHLKEMNDPVMTNVLLEIENMLARGKMDLPLNLCFAAIREDDLLLHQLLKRGLDPNESDNNGRTPLHIAASKGTLNCVLLLLEYHADPNCRDAEGSVPLWEAMVEGHEKVVKVLLEHGSTIDAGDVGHFACTAAEQGNLKLLKEIVLHGGDVTRPRATGTSALHTAVCEENIEMVKYLLEQGADVNKQDMHGWTPRDLAEQQGHEDIKALFREKLHERRVHIETSSSVPILKTGIRFLGRFTSEPNIRPASREVSFRIRETRARRKTNNFDNSLFGILANQSVPKNGLATVDEGRTGNPVRVTISCAEKDDIAGKLVLLPGSFKELLELGSNKFGIVATKVMNKDNNAEIDDVDVIRDGDHLIFATDS.

Over 1 to 61 (MRGGALLCGQ…PYDHKYRIWE (61 aa)) the chain is Cytoplasmic. A helical transmembrane segment spans residues 62–82 (AFLVVLVVYTAWVSPFEFGFL). The Extracellular segment spans residues 83-90 (RKPRPPLS). Residues 91–111 (ITDNIVNAFFAIDIIMTFFVG) traverse the membrane as a helical segment. Residues 112 to 134 (YLDKSTYLIVDDRKQIAFKYLRS) lie on the Cytoplasmic side of the membrane. The helical transmembrane segment at 135 to 155 (WFLLDLVSTIPSEAAMRISSQ) threads the bilayer. At 156–158 (SYG) the chain is on the extracellular side. Residues 159–179 (LFNMLRLWRLRRVGALFARLE) traverse the membrane as a helical; Voltage-sensor segment. Topologically, residues 180-193 (KDRNFNYFWVRCAK) are cytoplasmic. Residues 194–214 (LVCVTLFAVHCAACFYYLIAA) form a helical membrane-spanning segment. Residues 215–241 (RNSNPAKTWIGANVANFLEESLWMRYV) lie on the Extracellular side of the membrane. An intramembrane region (pore-forming) is located at residues 242-261 (TSMYWSITTLTTVGYGDLHP). The Extracellular segment spans residues 262 to 265 (VNTK). A helical membrane pass occupies residues 266–286 (EMIFDIFYMLFNLGLTAYLIG). The Cytoplasmic portion of the chain corresponds to 287–857 (NMTNLVVHGT…GDHLIFATDS (571 aa)). 372–493 (LFRGVSNDLL…IMNNLLQHLK (122 aa)) is an a nucleoside 3',5'-cyclic phosphate binding site. ANK repeat units follow at residues 515 to 546 (KMDLPLNLCFAAIREDDLLLHQLLKRGLDPNE), 550 to 579 (NGRTPLHIAASKGTLNCVLLLLEYHADPNC), 583 to 612 (EGSVPLWEAMVEGHEKVVKVLLEHGSTIDA), 614 to 643 (DVGHFACTAAEQGNLKLLKEIVLHGGDVTR), 647 to 676 (TGTSALHTAVCEENIEMVKYLLEQGADVNK), and 680 to 709 (HGWTPRDLAEQQGHEDIKALFREKLHERRV). Positions 790–857 (RVTISCAEKD…GDHLIFATDS (68 aa)) constitute a KHA domain.

It belongs to the potassium channel family. Plant (TC 1.A.1.4) subfamily. In terms of assembly, the potassium channel is probably composed of a homo- or heterotetrameric complex of pore-forming subunits. Possible heteromultimer with AKT2 or KAT3. Part of a K(+)-channel calcium-sensing kinase/phosphatase complex composed by a calcium sensor CBL (CBL1, CBL2, CBL3 or CBL9), a kinase CIPK (CIPK6, CIPK16 or CIPK23), a phosphatase PP2C (AIP1) and a K(+)-channel (AKT1). Interacts directly with AIP1, CBL10, CIPK6, CIPK16 and CIPK23. In terms of processing, phosphorylated by CIPK proteins CIPK6, CIPK16 and CIPK23. The activation by phosphorylation is induced by low K(+) conditions and stimulates K(+) uptake and relocation. Dephosphorylation by AIP1 repressed the transport activity. Preferentially expressed in the peripheral cell layers of root mature including root cortex and root hairs. Detected also, at a lower level, in the mesophyll of the leaves and at restricted sites corresponding to hydathodes and guard cells.

The protein resides in the cell membrane. In terms of biological role, highly selective inward-rectifying potassium channel that mediate potassium uptake by plant roots in response to low K(+) conditions, by a calcium-, CBL-, and CIPK-dependent pathway. Positively regulated by phosphorylation by CIPK23. Negatively regulated by a kinase-independent regulatory mechanism involving a competing direct binding of CBL10. Involved in the stomatal regulation by monitoring the turgor pressure in guard cells. Assuming opened or closed conformations in response to the voltage difference across the membrane, the channel is activated by hyperpolarization. May interact with the cytoskeleton or with regulatory proteins. Is essential with POT5/HAK5 for high-affinity potassium uptake in roots during seedling establishment and postgermination growth under low potassium conditions. The chain is Potassium channel AKT1 (AKT1) from Arabidopsis thaliana (Mouse-ear cress).